We begin with the raw amino-acid sequence, 395 residues long: Flagellin B (395 aa).

This sequence belongs to the bacterial flagellin family.

The protein resides in the secreted. It localises to the bacterial flagellum. Flagellin is the subunit protein which polymerizes to form the filaments of bacterial flagella. The sequence is that of Flagellin B (flaB) from Rhizobium meliloti (Ensifer meliloti).